The following is a 1336-amino-acid chain: Lysine-specific demethylase 2B (1336 aa).

A disordered region spans residues 1–25 (MAGPQMGGSAEDHPPRKRHAAEKQK). The segment covering 15 to 25 (PRKRHAAEKQK) has biased composition (basic residues). Position 57 is a phosphoserine (Ser57). In terms of domain architecture, JmjC spans 178 to 346 (FSHTKLEHLV…MQLRIYEIED (169 aa)). Residue Thr239 participates in substrate binding. Fe cation is bound by residues His242 and Asp244. Lys259 contacts substrate. Position 314 (His314) interacts with Fe cation. Residues 410-430 (MEEEACDQQPQEEEEKDEEGE) show a composition bias toward acidic residues. The tract at residues 410 to 465 (MEEEACDQQPQEEEEKDEEGEGRDRAPKPPTDGSTSPTSTPSEDQEALGKKPKAPA) is disordered. Positions 440–451 (TDGSTSPTSTPS) are enriched in low complexity. 2 positions are modified to phosphoserine: Ser474 and Ser477. Residue Thr493 is modified to Phosphothreonine. A Phosphoserine modification is found at Ser497. The CXXC-type zinc finger occupies 606–652 (ARRRRTRCRKCEACLRTECGECHFCKDMKKFGGPGRMKQSCIMRQCI). Zn(2+)-binding residues include Cys613, Cys616, Cys619, Cys624, Cys627, Cys630, Cys646, Cys651, Cys662, Cys665, Cys688, Cys691, His696, Cys699, Cys719, and Cys722. The PHD-type zinc-finger motif lies at 659-725 (TAVCLVCGEA…CWECPKCNHA (67 aa)). 2 disordered regions span residues 727-843 (KTGK…SLSP) and 855-1034 (QLKP…SPPK). Over residues 749–799 (KEQKMNRDNKEGQEPAKRRSECEEAPRRRSDEHSKKVPPDGLLRRKSDDVH) the composition is skewed to basic and acidic residues. Over residues 819–843 (SSLQTSPGSSSHLSPRPPLGSSLSP) the composition is skewed to low complexity. Residues Lys857 and Lys890 each participate in a glycyl lysine isopeptide (Lys-Gly) (interchain with G-Cter in SUMO2) cross-link. The segment covering 902–911 (PKTRESDHSR) has biased composition (basic and acidic residues). Residues 932–941 (KVKMRRKRRL) are compositionally biased toward basic residues. Residues 942-960 (PNKELSRELSKELNHEIQR) show a composition bias toward basic and acidic residues. Residues 943–971 (NKELSRELSKELNHEIQRTENSLANENQQ) are a coiled coil. Position 951 is a phosphoserine (Ser951). Polar residues predominate over residues 961–971 (TENSLANENQQ). Phosphoserine is present on residues Ser975, Ser979, Ser1018, and Ser1031. Positions 1014–1024 (PSLRSPPRVIS) are enriched in low complexity. The F-box domain occupies 1059 to 1105 (DGAAHVMHREVWMAVFSYLSHQDLCVCMRVCRTWNRWCCDKRLWTRI). 7 LRR repeats span residues 1093–1120 (NRWCCDKRLWTRIDLNHCKSITPLMLSG), 1133–1154 (WTNISKKQLSWLINRLPGLRDL), 1156–1182 (LSGCSWIAVSALCSSSCPLLRTLDVQW), 1222–1247 (GLDITDASLRLIIRHMPLLSKLHLSY), 1248–1277 (CNHVTDQSINLLTAVGTTTRDSLTEINLSD), 1278–1302 (CNKVTDQCLSFFKRCGNICHIDLRY), and 1303–1336 (CKQVTKEGCEQFIAEMSVSVQFGQVEEKLLQKLS).

The protein belongs to the JHDM1 histone demethylase family. Interacts with SKP1, forming heterodimers. The heterodimeric KDM2B-SKP1 complex interacts with the PCGF1-BCORL1 heterodimeric complex to form a homotetrameric polycomb repression complex 1 (PRC1.1). Directly interacts with CUL1. The SKP1-KDM2B complex interacts with UBB. The cofactor is Fe(2+).

Its subcellular location is the nucleus. It localises to the nucleolus. The protein resides in the chromosome. The catalysed reaction is N(6),N(6)-dimethyl-L-lysyl(36)-[histone H3] + 2 2-oxoglutarate + 2 O2 = L-lysyl(36)-[histone H3] + 2 formaldehyde + 2 succinate + 2 CO2. With respect to regulation, histone demethylase activity is inhibited by fumarate. Histone demethylase that demethylates 'Lys-4' and 'Lys-36' of histone H3, thereby playing a central role in histone code. Preferentially demethylates trimethylated H3 'Lys-4' and dimethylated H3 'Lys-36' residue while it has weak or no activity for mono- and tri-methylated H3 'Lys-36'. Preferentially binds the transcribed region of ribosomal RNA and represses the transcription of ribosomal RNA genes which inhibits cell growth and proliferation. May also serve as a substrate-recognition component of the SCF (SKP1-CUL1-F-box protein)-type E3 ubiquitin ligase complex. The protein is Lysine-specific demethylase 2B (KDM2B) of Homo sapiens (Human).